The sequence spans 494 residues: Alpha-amylase-related protein (494 aa).

Positions 1-20 are cleaved as a signal peptide; sequence MFKFATAVILCLVAASSTLA. At Q21 the chain carries Pyrrolidone carboxylic acid. A disulfide bridge links C48 with C104. Residues N118, Q169, and D178 each contribute to the Ca(2+) site. C157 and C171 form a disulfide bridge. Chloride is bound at residue R206. The Nucleophile role is filled by D208. H212 is a binding site for Ca(2+). E245 acts as the Proton donor in catalysis. The chloride site is built by N308 and R343. 3 cysteine pairs are disulfide-bonded: C376/C382, C418/C441, and C448/C460.

It belongs to the glycosyl hydrolase 13 family. Monomer. The cofactor is Ca(2+). It depends on chloride as a cofactor.

It is found in the secreted. The enzyme catalyses Endohydrolysis of (1-&gt;4)-alpha-D-glucosidic linkages in polysaccharides containing three or more (1-&gt;4)-alpha-linked D-glucose units.. The protein is Alpha-amylase-related protein (Amyrel) of Drosophila bipectinata (Fruit fly).